The chain runs to 375 residues: MEGCETRGQLYYHPAYLFAIIFQGTSGYLTFPILFIILKKYAFKVYYHPNLVFLMMLNVVSCLLLGGLTAWSATNFFLNLMIKPSPCDLLLKTYFCSKIRGTFLFAFCLVTTSHAGILLERSWATYSVKNYERQGRALGTILAIVAVAVAATAIFILLLPEDGEEMITTCLTFSASKSIGSRVYVMFFVQLLLDAVISIVHLVLYRYNKNIDKHGSTSLSEQFQRNENVKTLKQVTPLLILSNVTIGVYIFIVSVFRLYKDYLPPNWYEIIAANLFIMPHMPFMFTSLILVELWLGKKRQDRIHKDMMASQDVPLDDQFHIAMENWDVHFQSRLKAQARANRKPLSANWTSSTLITKFKKRQTTVAVISIPPSPS.

7 consecutive transmembrane segments (helical) span residues 17–37 (LFAI…LFII), 51–71 (LVFL…LTAW), 99–119 (IRGT…GILL), 138–158 (LGTI…FILL), 183–203 (VYVM…VHLV), 236–256 (TPLL…VSVF), and 275–295 (LFIM…ELWL).

This sequence belongs to the nematode receptor-like protein sra family.

The protein localises to the membrane. The polypeptide is Serpentine receptor class alpha-39 (sra-39) (Caenorhabditis elegans).